The following is a 723-amino-acid chain: Protein Hook homolog (723 aa).

In terms of domain architecture, Calponin-homology (CH) spans 4-120; the sequence is TELCECLVQW…RLLQLILGCA (117 aa). Coiled-coil stretches lie at residues 162–423 and 457–665; these read VLPE…MQLQ and EIKE…IVSA. Residues 682 to 723 form a disordered region; that stretch reads LANGGPMQGGQSFLARQRQATSRRTTVSTTHPGHARSVNFVN. Over residues 696–711 the composition is skewed to low complexity; it reads ARQRQATSRRTTVSTT.

The protein belongs to the hook family. Interacts with microtubules.

The protein localises to the cytoplasm. It localises to the cytoskeleton. Its function is as follows. May function to promote vesicle trafficking and/or fusion. May act to link a number of membrane-bound organelles to the cytoskeleton. The chain is Protein Hook homolog from Branchiostoma floridae (Florida lancelet).